The following is a 350-amino-acid chain: uncharacterized protein (350 aa).

In terms of domain architecture, Integrase catalytic spans 164-327; sequence NDPLPGYVEV…EKTRIGARVV (164 aa).

This is an uncharacterized protein from Sinorhizobium fredii (strain NBRC 101917 / NGR234).